Reading from the N-terminus, the 338-residue chain is Protein mono-ADP-ribosyltransferase PARP11 (338 aa).

At E13 the chain carries ADP-ribosyl glutamic acid. K18 is modified (N6-(ADP-ribosyl)lysine). Residues 22–106 enclose the WWE domain; that stretch reads NEVDDMDTSD…TTGKQRLIKR (85 aa). C56 and C72 each carry ADP-ribosylcysteine. ADP-ribosyl aspartic acid is present on D87. In terms of domain architecture, PARP catalytic spans 123-338; sequence IPMPPHWENV…IYPEYLIDFH (216 aa).

It belongs to the ARTD/PARP family. In terms of assembly, interacts with PARP12; this interaction plays a role in zika virus suppression. Auto-mono-ADP-ribosylated.

Its subcellular location is the nucleus. The protein resides in the nuclear pore complex. It catalyses the reaction L-aspartyl-[protein] + NAD(+) = 4-O-(ADP-D-ribosyl)-L-aspartyl-[protein] + nicotinamide. The catalysed reaction is L-cysteinyl-[protein] + NAD(+) = S-(ADP-D-ribosyl)-L-cysteinyl-[protein] + nicotinamide + H(+). The enzyme catalyses L-glutamyl-[protein] + NAD(+) = 5-O-(ADP-D-ribosyl)-L-glutamyl-[protein] + nicotinamide. It carries out the reaction L-lysyl-[protein] + NAD(+) = N(6)-(ADP-D-ribosyl)-L-lysyl-[protein] + nicotinamide + H(+). Mono-ADP-ribosyltransferase that mediates mono-ADP-ribosylation of target proteins. Plays a role in nuclear envelope stability and nuclear remodeling during spermiogenesis. Inhibits the type I interferon activated signaling pathway. Mechanistically, mono-ADP-ribosylates beta-TrCP/BTRC to promote IFNAR1 ubiquitination and protect BTRC from ubiquitin-proteasome degradation. Additionally, acts as an antiviral factor by cooperating with PARP12 to suppress Zika virus replication, independent of IFNAR1 regulation or intrinsic PARP enzymatic activity. Instead, facilitates the degradation of viral NS1 and NS3 proteins, potentially disrupting viral replication. The protein is Protein mono-ADP-ribosyltransferase PARP11 of Homo sapiens (Human).